Here is a 1385-residue protein sequence, read N- to C-terminus: DNA-directed RNA polymerase subunit beta' (1385 aa).

Residues cysteine 72, cysteine 74, cysteine 87, and cysteine 90 each coordinate Zn(2+). Positions 467, 469, and 471 each coordinate Mg(2+). Residues cysteine 829, cysteine 910, cysteine 917, and cysteine 920 each coordinate Zn(2+).

It belongs to the RNA polymerase beta' chain family. In terms of assembly, the RNAP catalytic core consists of 2 alpha, 1 beta, 1 beta' and 1 omega subunit. When a sigma factor is associated with the core the holoenzyme is formed, which can initiate transcription. It depends on Mg(2+) as a cofactor. Zn(2+) is required as a cofactor.

It catalyses the reaction RNA(n) + a ribonucleoside 5'-triphosphate = RNA(n+1) + diphosphate. Its function is as follows. DNA-dependent RNA polymerase catalyzes the transcription of DNA into RNA using the four ribonucleoside triphosphates as substrates. This Elusimicrobium minutum (strain Pei191) protein is DNA-directed RNA polymerase subunit beta'.